We begin with the raw amino-acid sequence, 287 residues long: Oxaloacetate decarboxylase (287 aa).

A substrate-binding site is contributed by serine 50. Mg(2+) is bound at residue aspartate 88. Substrate is bound by residues arginine 159 and histidine 235.

Belongs to the isocitrate lyase/PEP mutase superfamily. Oxaloacetate decarboxylase family. As to quaternary structure, homotetramer; dimer of dimers. Requires Mg(2+) as cofactor.

The enzyme catalyses oxaloacetate + H(+) = pyruvate + CO2. Catalyzes the decarboxylation of oxaloacetate into pyruvate. Seems to play a role in maintaining cellular concentrations of bicarbonate and pyruvate. The chain is Oxaloacetate decarboxylase from Marinomonas sp. (strain MWYL1).